Consider the following 829-residue polypeptide: Outer dense fiber protein 2 (829 aa).

Residues S73 and S74 each carry the phosphoserine modification. T92 carries the post-translational modification Phosphothreonine. Phosphoserine; by TSSK4 is present on S95. A phosphoserine mark is found at S106 and S109. Phosphothreonine is present on T110. Residues S115 and S129 each carry the phosphoserine modification. K138 is covalently cross-linked (Glycyl lysine isopeptide (Lys-Gly) (interchain with G-Cter in SUMO2)). A Phosphoserine modification is found at S139. Positions 144–217 (QKGERQMAKR…MSKLVEAEMD (74 aa)) form a coiled coil. T231 bears the Phosphothreonine mark. 2 coiled-coil regions span residues 245-423 (DINT…AEQL) and 461-798 (EIIV…NYVQ). A Phosphoserine modification is found at S261. The disordered stretch occupies residues 392–413 (KQKGDRDKESLKKAIRAQKERA). Positions 537–701 (KNYEGMIDNY…EAIHQSQLRL (165 aa)) are interaction with BBOF1. At S632 the chain carries Phosphoserine.

The protein belongs to the ODF2 family. In terms of assembly, self-associates. Associates with microtubules and forms a fibrillar structure partially linked to the microtubule network. Interacts via its C-terminus with PLK1. Interacts with ODF1. Interacts with MARK4; the interaction is required for localization of ODF2 to centrioles. Interacts with TSSK4. Interacts with AKNA. Interacts with QRICH2. Interacts with CFAP58. Interacts with BBOF1. Interacts with CCDC38. Interacts with CCDC42. Post-translationally, tyrosine phosphorylated. Phosphorylated by TSSK4 on Ser-95. In terms of tissue distribution, testis-specific (at protein level). Highly expressed in cytoplasm of step 2 round spermatids. Detected in the middle piece and extends to about half the principal piece of the sperm tails.

Its subcellular location is the cytoplasm. The protein resides in the cytoskeleton. It is found in the microtubule organizing center. The protein localises to the centrosome. It localises to the cell projection. Its subcellular location is the cilium. The protein resides in the centriole. It is found in the spindle pole. The protein localises to the flagellum. Seems to be a major component of sperm tail outer dense fibers (ODF). ODFs are filamentous structures located on the outside of the axoneme in the midpiece and principal piece of the mammalian sperm tail and may help to maintain the passive elastic structures and elastic recoil of the sperm tail. May have a modulating influence on sperm motility. Functions as a general scaffold protein that is specifically localized at the distal/subdistal appendages of mother centrioles. Component of the centrosome matrix required for the localization of PLK1 and NIN to the centrosomes. Required for the formation and/or maintenance of normal CETN1 assembly. The polypeptide is Outer dense fiber protein 2 (ODF2) (Homo sapiens (Human)).